A 192-amino-acid polypeptide reads, in one-letter code: Shikimate kinase (192 aa).

Residue 32 to 37 participates in ATP binding; that stretch reads GAGKSA. Ser36 contributes to the Mg(2+) binding site. Residues Asp54, Arg78, and Gly100 each contribute to the substrate site. Arg138 is a binding site for ATP. Position 157 (Arg157) interacts with substrate.

Belongs to the shikimate kinase family. As to quaternary structure, monomer. Mg(2+) serves as cofactor.

Its subcellular location is the cytoplasm. It catalyses the reaction shikimate + ATP = 3-phosphoshikimate + ADP + H(+). It functions in the pathway metabolic intermediate biosynthesis; chorismate biosynthesis; chorismate from D-erythrose 4-phosphate and phosphoenolpyruvate: step 5/7. Its function is as follows. Catalyzes the specific phosphorylation of the 3-hydroxyl group of shikimic acid using ATP as a cosubstrate. The polypeptide is Shikimate kinase (Rhizobium meliloti (strain 1021) (Ensifer meliloti)).